Consider the following 466-residue polypeptide: Putative multidrug resistance protein MdtD (466 aa).

The next 14 membrane-spanning stretches (helical) occupy residues Leu-11 to Ala-31, Ser-48 to Ala-68, Ile-71 to Cys-91, Val-105 to Ile-125, Phe-137 to Val-157, Trp-164 to Met-184, Phe-194 to Asp-214, Ser-218 to Leu-238, Phe-262 to Met-282, Phe-286 to Val-306, Val-328 to Ala-347, Trp-351 to Phe-370, Leu-403 to Gly-423, and Met-429 to Phe-449.

Belongs to the major facilitator superfamily. TCR/Tet family.

Its subcellular location is the cell inner membrane. This is Putative multidrug resistance protein MdtD from Pectobacterium carotovorum subsp. carotovorum (strain PC1).